Reading from the N-terminus, the 157-residue chain is Protein FAM162B (157 aa).

A helical transmembrane segment spans residues 104-123 (ACYIMIGLTIVACFAVIVSA).

The protein belongs to the UPF0389 family.

The protein resides in the membrane. This chain is Protein FAM162B (Fam162b), found in Mus musculus (Mouse).